Consider the following 351-residue polypeptide: MRKIIHVDMDCFYAAVEMRDNPALRDIPIAIGGSRERRGVISTANYPARKFGVRSAMPTGMALKLCPHLTLLPGRFEAYKEASQHIREIFSRYTSRIEPLSLDEAYLDVTDSTYCHGSATLIAQEIRQTIFNELQLTASAGIAPVKFLAKIASDLNKPNGQYVITPADVPEFLKTLPLGKIPGVGKVSAARLETMGLRTCEDVQKYDLAMLLKRFGKFGRVLWERSQGIDERDVNNERLRKSIGVERTLAEDIHEWAECEAIIERLYPELERRLAKVKPDLLIARQGVKLKFNDFQLTTQEHVWPRLSKDDLITTARKTWNERRGGRGVRLVGLHVTLLDPQLERQLLLGL.

A UmuC domain is found at Ile-4–Gly-185. Residues Asp-8 and Asp-103 each coordinate Mg(2+). Residue Glu-104 is part of the active site.

It belongs to the DNA polymerase type-Y family. Monomer. Requires Mg(2+) as cofactor.

The protein localises to the cytoplasm. It catalyses the reaction DNA(n) + a 2'-deoxyribonucleoside 5'-triphosphate = DNA(n+1) + diphosphate. Functionally, poorly processive, error-prone DNA polymerase involved in untargeted mutagenesis. Copies undamaged DNA at stalled replication forks, which arise in vivo from mismatched or misaligned primer ends. These misaligned primers can be extended by PolIV. Exhibits no 3'-5' exonuclease (proofreading) activity. May be involved in translesional synthesis, in conjunction with the beta clamp from PolIII. The sequence is that of DNA polymerase IV from Citrobacter koseri (strain ATCC BAA-895 / CDC 4225-83 / SGSC4696).